The following is a 2904-amino-acid chain: Protein eyes shut homolog (2904 aa).

An N-terminal signal peptide occupies residues 1–23 (MRNPKLAIIVFLLSCVIYGPVYS). Residues N41 and N135 are each glycosylated (N-linked (GlcNAc...) asparagine). 4 consecutive EGF-like domains span residues 174 to 216 (KPQL…RYCE), 217 to 259 (NVDG…VNCS), 263 to 298 (GNQNCSKWCKEGACLKVSSTSYRCECFTGYTGTYCE), and 300 to 336 (KRLFCDSNPCRNDGRCEETANGYVCTCPGGFTGLNCE). 6 disulfide bridges follow: C178–C193, C187–C204, C206–C215, C221–C232, C226–C247, and C249–C258. Residues N257 and N266 are each glycosylated (N-linked (GlcNAc...) asparagine). Cystine bridges form between C267-C276, C271-C286, C288-C297, C304-C315, C309-C324, and C326-C335. N-linked (GlcNAc...) asparagine glycosylation occurs at N362. EGF-like domains lie at 375–411 (QAEVCGTLPCLNGGICVVPNGQYHCRCRQGFSGKNCE), 413–451 (IIDFCKLLNINCLNEGLCLNRVGGYNCLCAPGWTGEFCQ), and 453–496 (LENA…PYCE). 12 disulfide bridges follow: C379/C390, C384/C399, C401/C410, C417/C430, C424/C439, C441/C450, C457/C470, C464/C484, C486/C495, C502/C513, C507/C522, and C524/C533. One can recognise an EGF-like 8; calcium-binding domain in the interval 498-534 (EVNECDSSPCQHQGTCTDFVGYYKCTCPSGYTGIDCE). A glycan (N-linked (GlcNAc...) asparagine) is linked at N544. An EGF-like 9 domain is found at 565-603 (HTPCPHYLQPCANGGHCVLHNITSYSCVCAPGWTGATCL). 78 disulfides stabilise this stretch: C568–C581, C575–C591, C593–C602, C609–C620, C614–C629, C631–C640, C645–C656, C650–C665, C667–C676, C683–C694, C688–C703, C705–C714, C721–C732, C726–C741, C743–C752, C759–C772, C764–C781, C783–C792, C799–C810, C804–C819, C821–C830, C837–C848, C842–C857, C859–C868, C875–C886, C880–C895, C897–C906, C913–C924, C918–C933, C935–C944, C951–C962, C956–C971, C973–C982, C987–C999, C993–C1014, C1016–C1025, C1032–C1042, C1037–C1051, C1053–C1062, C1069–C1080, C1074–C1089, C1091–C1100, C1107–C1118, C1112–C1127, C1129–C1138, C1145–C1156, C1150–C1167, C1169–C1178, C1185–C1198, C1192–C1208, C1210–C1219, C1226–C1237, C1231–C1246, C1248–C1257, C1264–C1275, C1269–C1284, C1286–C1295, C1302–C1313, C1307–C1322, C1324–C1333, C1340–C1351, C1345–C1360, C1362–C1371, C1378–C1388, C1383–C1397, C1399–C1408, C1415–C1426, C1420–C1435, C1437–C1446, C1453–C1469, C1463–C1479, C1481–C1490, C1497–C1508, C1502–C1517, C1519–C1528, C1535–C1545, C1540–C1556, and C1558–C1567. N585 is a glycosylation site (N-linked (GlcNAc...) asparagine). The region spanning 605–641 (NINECVQHRCQNRATCVDEVGGYSCLCGHGYTGVHCE) is the EGF-like 10; calcium-binding domain. The region spanning 642-677 (LDFCSGHQCSEHAVCVDQQHNYTCRCMLGYEGTLCE) is the EGF-like 11 domain. N662 carries an N-linked (GlcNAc...) asparagine glycan. Residues 679-715 (ETDECKSAPCTNNATCIDLVAGYQCLCAPGFKGRTCS) enclose the EGF-like 12; calcium-binding domain. The N-linked (GlcNAc...) asparagine glycan is linked to N691. 3 EGF-like domains span residues 717-753 (SMNECWSRPCNNGGSCIDLVNDYICNCPLGFTGHDCS), 755-793 (PATGCTSNPCNTKGTSMCEEQQDGFKCVCHHGYTGLFCE), and 795-831 (SINHCVEGLCHHGSECVDLTKGFMCECLPGLRGRLCE). The EGF-like 16; calcium-binding domain maps to 833–869 (NIDDCLDKPCGALSICKDGINAYDCFCAPGFVGNNCE). The region spanning 871-907 (EVNECLSQPCQNGASCSDELNSFSCLCLAGTTGSLCE) is the EGF-like 17; calcium-binding domain. One can recognise an EGF-like 18; calcium-binding domain in the interval 909 to 945 (NIDECQSSPCMNNGTCLDLSDGFKCICPSGFSGPECS). N-linked (GlcNAc...) asparagine glycosylation occurs at N921. The EGF-like 19; calcium-binding domain maps to 947–983 (DINECVSYPCKNGGSCIDQPGNYYCRCLAPFKGLNCE). One can recognise an EGF-like 20 domain in the interval 984 to 1026 (LLPCEAVNPCDNGAECVEEADLVLFPLGFQCRCRKGFTGPRCE). Residues 1028-1063 (NIDECSSNPCLNGFCYDAVDGFYCLCNPGYAGVRCE) form the EGF-like 21; calcium-binding domain. One can recognise an EGF-like 22 domain in the interval 1065–1101 (HINDCASNMCENNSTCVDLHLSYNCLCLPGWEGEYCQ). N1077 is a glycosylation site (N-linked (GlcNAc...) asparagine). The EGF-like 23; calcium-binding domain maps to 1103-1139 (ETNECLSNPCKNNATCTDLLNAYRCVCPQGWTGLDCD). N1115 is a glycosylation site (N-linked (GlcNAc...) asparagine). EGF-like domains follow at residues 1141 to 1179 (DVKECSSSPCLNGAHCVESDTPGEFSCTCPPFFTGPLCE) and 1181 to 1220 (PYDPCELQRNPCLHNSTCRAQSDGTALCVCPVGFEGTRCE). N1195 carries N-linked (GlcNAc...) asparagine glycosylation. Residues 1222-1258 (DSDDCVSRPCQNRGICVDGVNSYSCFCEPGFSGLHCE) form the EGF-like 26; calcium-binding domain. Positions 1260-1296 (DINECASNPCQNQAVCQDLVNGFQCSCVPGYFGPHCN) constitute an EGF-like 27; calcium-binding domain. The EGF-like 28; calcium-binding domain maps to 1298 to 1334 (DVNECDSSPCLHESVCINKPGGFACVCSAGFSGKWCE). The EGF-like 29; calcium-binding domain maps to 1336-1372 (NVDECKSNPCRNNGSCIDGLNGYQCVCSRGFMGDHCE). N1348 carries N-linked (GlcNAc...) asparagine glycosylation. An EGF-like 30; calcium-binding domain is found at 1374 to 1409 (NTDECSSGPCVHGSCLDEIDAFSCQCEVGWTGHRCQ). The 37-residue stretch at 1411–1447 (NINECEAHPCLNGGSCVDLLDKYACICADGFTGKNCD) folds into the EGF-like 31; calcium-binding domain. The region spanning 1449-1491 (DQNVCLQTSLNFSLCFNGGTCVDGPGVNFTCSCRPGFMGDFCE) is the EGF-like 32 domain. 2 N-linked (GlcNAc...) asparagine glycosylation sites follow: N1459 and N1476. Residues 1493-1529 (EMNECCSEPCFNGAICQDLINGYQCHCRPGWTGLHCE) form the EGF-like 33; calcium-binding domain. The EGF-like 34 domain maps to 1531–1568 (DINECLLQPCNQGMCIQNEPGHGYTCFCRPGFVGENCE). 3 N-linked (GlcNAc...) asparagine glycosylation sites follow: N1591, N1755, and N1788. The Laminin G-like 1 domain maps to 1640-1818 (ASFGGYSGNS…AIARNNVDNC (179 aa)). 4 cysteine pairs are disulfide-bonded: C1792/C1818, C1860/C1871, C1865/C1885, and C1887/C1896. Residues 1856-1897 (PAPVCPQGICLNGGTCRPVSLPSGASSFFCDCPLHFTGRLCE) enclose the EGF-like 35 domain. Positions 1902–2102 (VFSPRFDGNS…NIQNCDAAVC (201 aa)) constitute a Laminin G-like 2 domain. N-linked (GlcNAc...) asparagine glycosylation is found at N2025 and N2064. 7 disulfide bridges follow: C2071–C2102, C2102–C2113, C2107–C2122, C2124–C2133, C2138–C2149, C2143–C2159, and C2161–C2170. EGF-like domains follow at residues 2098-2134 (DAAVCQHQPCRNGGTCISDAESWFCACPSLYSGKLCQ) and 2135-2171 (FTACERNPCARGATCVPQTQLEAACLCPYGRQGLLCD). Residues N2175 and N2216 are each glycosylated (N-linked (GlcNAc...) asparagine). In terms of domain architecture, Laminin G-like 3 spans 2182–2372 (SGLDEFGYSS…PLSGRNVGQC (191 aa)). Cystine bridges form between C2339-C2372, C2377-C2388, C2382-C2397, C2399-C2408, C2415-C2431, C2425-C2440, and C2442-C2451. EGF-like domains lie at 2373-2409 (GVNPCSLVFCHNGGTCVDSGSSVYCQCVFGWKGALCS) and 2411-2452 (KVSF…LHCQ). The region spanning 2459 to 2642 (DPFFSGNQSS…NVGDWDGTAC (184 aa)) is the Laminin G-like 4 domain. N-linked (GlcNAc...) asparagine glycosylation is found at N2465, N2528, and N2570. EGF-like domains follow at residues 2638–2675 (DGTACGYKVCKNGGHCHPSGDFSFTCICPSLWTGSRCQ) and 2676–2714 (QSIQCLNNLCQHNSVCIHNSTSASYSCMCSLGWTGTHCD). Intrachain disulfides connect C2642–C2653, C2647–C2663, C2665–C2674, C2680–C2691, C2685–C2702, and C2704–C2713. Residue N2694 is glycosylated (N-linked (GlcNAc...) asparagine). A Laminin G-like 5 domain is found at 2719–2894 (LKTIRFIGNS…TKQLQFLQTC (176 aa)). N-linked (GlcNAc...) asparagine glycans are attached at residues N2750 and N2816.

This sequence belongs to the EYS family. In terms of tissue distribution, expressed in retina where it localizes between the retinal pigment epithelium and the outer nuclear layer (at protein level).

It localises to the cell projection. The protein resides in the cilium. The protein localises to the cytoplasm. Its subcellular location is the cytoskeleton. It is found in the cilium axoneme. It localises to the secreted. The protein resides in the extracellular space. The protein localises to the extracellular matrix. Its subcellular location is the interphotoreceptor matrix. Functionally, required to maintain the integrity of photoreceptor cells. Specifically required for normal morphology of the photoreceptor ciliary pocket, and might thus facilitate protein trafficking between the photoreceptor inner and outer segments via the transition zone. This chain is Protein eyes shut homolog, found in Danio rerio (Zebrafish).